A 103-amino-acid polypeptide reads, in one-letter code: OMEGA-ectatommitoxin(02)-Rm1d (103 aa).

A signal peptide spans 1–30 (MKDSYISIVIAYLMVTFILVSSMPIEGEKR). Cystine bridges form between cysteine 39-cysteine 54, cysteine 49-cysteine 70, and cysteine 72-cysteine 81. One can recognise an EGF-like domain in the interval 43-82 (LNDENYCFNGKCVHLVAQDEPGKPYYSCICDEFYIGERCG).

It belongs to the EGF domain peptide family. As to expression, expressed by the venom gland.

It is found in the secreted. In terms of biological role, ant peptide with probable defensive activity which acts as a potent agonist of the mammalian epidermal growth factor receptor (EGFR). Mimics, both structurally and functionally, vertebrate epidermal growth factor (EGF) peptide hormones. In vivo, intraplantar injection in mice causes long-lasting (several days) hypersensitivity of the injected paw to both mechanical and thermal stimuli. Its long-lasting effect is unusual for venom toxins whose effects are usually immediate. One possible explanation is that it would reduce the duration of a nest attack, discourage future attacks, or enhance the actions of subsequent exposure to other pain-inducing venom peptides. The polypeptide is OMEGA-ectatommitoxin(02)-Rm1d (Rhytidoponera metallica (Australian green-headed ant)).